A 192-amino-acid chain; its full sequence is Protein SHORT HYPOCOTYL IN WHITE LIGHT 1 (192 aa).

The short motif at 43-50 is the Nuclear localization signal element; that stretch reads FRRLNRSL. Residues 70–92 form a disordered region; it reads GGDNYDVVPDDDGFSDDDDEEDE. Acidic residues predominate over residues 77 to 92; the sequence is VPDDDGFSDDDDEEDE. Helical transmembrane passes span 122–142 and 159–179; these read ILPAAMSPRLVSFAVDGILLL and GGTVFTVILLIRLFWAAASFF.

As to quaternary structure, interacts with HY5 and COP1 in the nucleus. As to expression, expressed in young seedlings (e.g. hypocotyl and cotyledons) and in green tissues (e.g. leaves, stems, sepals, and young siliques).

It localises to the nucleus membrane. Its function is as follows. Negative regulator of photomorphogenesis modulating both light and abscisic acid (ABA) signaling pathways. Negatively regulates the light-mediated inhibition of hypocotyl elongation, probably in a PHYB-mediated signaling pathway, but promotes flowering time (especially in long days) and lateral root formation. Enhances light-regulated gene expression. Promotes COP1-mediated degradation of HY5 during seedling development (e.g. hypocotyl growth) through enhanced ubiquitination in the darkness. Also involved in root gravitropism. The sequence is that of Protein SHORT HYPOCOTYL IN WHITE LIGHT 1 from Arabidopsis thaliana (Mouse-ear cress).